The following is a 91-amino-acid chain: Alpha-defensin-related sequence 10 (91 aa).

The N-terminal stretch at 1–19 (MKKLVLLSAFVLLAFQVQA) is a signal peptide. Residues 20–65 (DSIQNTDEETKTEEQPGEENQAMSVSFGDPEGSALQDAAVGMARPC) constitute a propeptide that is removed on maturation. The disordered stretch occupies residues 21-52 (SIQNTDEETKTEEQPGEENQAMSVSFGDPEGS). Repeat copies occupy residues 65–67 (CPP), 68–70 (CPS), 71–73 (CPS), 74–76 (CPW), 77–79 (CPM), 80–82 (CPR), and 83–85 (CPS). The segment at 65-85 (CPPCPSCPSCPWCPMCPRCPS) is 7 X 3 AA tandem repeats of C-P-X.

This sequence belongs to the alpha-defensin family. As to expression, paneth cells of the small bowel.

It is found in the secreted. Apparent precursor of a secreted, cationic, proline- and cysteine-rich peptide that contains Cys-Pro-Xaa repeats. Unlike cryptdin, the proposed mature peptide region lacks the structural motif characteristic of defensins. It may have microbicidal activities. This Mus musculus (Mouse) protein is Alpha-defensin-related sequence 10 (Defa-rs10).